The primary structure comprises 357 residues: Homeobox protein HMX3 (357 aa).

2 disordered regions span residues 1 to 58 (MPEP…LFAP) and 129 to 229 (LPRP…RKKK). Pro residues predominate over residues 16–27 (PQPPPPPPPAPK). Basic and acidic residues-rich tracts occupy residues 130-140 (PRPEASEKALL) and 149-173 (TDRD…KSPD). Phosphoserine occurs at positions 153 and 180. Residues 191-209 (AAPGAAGASVGAAAATPGA) show a composition bias toward low complexity. Residues 210 to 223 (EDWKKGAESPEKKP) show a composition bias toward basic and acidic residues. Positions 227 to 286 (KKKTRTVFSRSQVFQLESTFDMKRYLSSSERAGLAASLHLTETQVKIWFQNRRNKWKRQL) form a DNA-binding region, homeobox.

Belongs to the HMX homeobox family.

It is found in the nucleus. In terms of biological role, transcription factor involved in specification of neuronal cell types and which is required for inner ear and hypothalamus development. Binds to the 5'-CAAGTG-3' core sequence. Controls semicircular canal formation in the inner ear. Also required for hypothalamic/pituitary axis of the CNS. This is Homeobox protein HMX3 (HMX3) from Homo sapiens (Human).